Here is a 1191-residue protein sequence, read N- to C-terminus: WASH complex subunit homolog 5 (1191 aa).

This sequence belongs to the strumpellin family. As to quaternary structure, component of the WASH complex.

The protein resides in the early endosome. Functionally, acts at least in part as component of the WASH complex which may regulate wash nucleation-promoting factor (NPF) activity and is required for its membrane targeting during endosomal sorting. During embryogenesis, not involved in the wash-dependent developmental migration of hemocytes anteriorly from the tail. This is WASH complex subunit homolog 5 from Drosophila melanogaster (Fruit fly).